The primary structure comprises 88 residues: MVKLRLKRCGRKQRAVYRIVAIDVRSRREGKDLRKVGFYDPIKNQTYLNVPAILYFLEKGAQPTGTVQDILKKAEVFKELRPNQPKFN.

Belongs to the bacterial ribosomal protein bS16 family.

Its subcellular location is the plastid. It localises to the chloroplast. The protein is Small ribosomal subunit protein bS16c of Atropa belladonna (Belladonna).